Reading from the N-terminus, the 186-residue chain is UPF0301 protein Daro_3893 (186 aa).

It belongs to the UPF0301 (AlgH) family.

The polypeptide is UPF0301 protein Daro_3893 (Dechloromonas aromatica (strain RCB)).